Reading from the N-terminus, the 661-residue chain is MKNLCKISDDYLNSKLKYLKLLSKQYPSISKASTEIINLEAILNLPKGTEHFITDVHGEYEPFVHVLKNGSGVIKRKIEELFSNTIRDSEKKMLATLVYYPEQKLDLIIKQEENIDDFYRINIYRLIELCKYASSKYTRSKVRKLLPENFKYIIEELLHEHVKSEHKEEYYKSIVETIVDIGIAKEFIIAISTVIQKLVVDRLHVIGDIYDRGPRPDIIVDKLIEHHCVDIQWGNHDILWMGAASGEKTCIANALRISARYANLDIVEDIYGINLLPLATFAIEMYKDDPCKEFIPKVNDQSVTTTEKSLMAKMHKAISIIQFKLEGEVIRRRPEFEMEHRLLLNMINYDEGTINLKGKTYKLKDTYLPTIDKKDPYKLTMEERNVIDKLVSSFRGSEKLQKHVSFLFSKGSIYLKANSNLLIHGCVPLNEDGSFMSMNIMGKEYKGKALMDKMESLAREGFFFKDKAEEKLYGMDIMWYLWTGKCSSLFGKDDMTTFERYFIAEKETHKENKNPYFKLRENEMACKRLFEEFDLELDESHIINGHVPVESKNGESPIKANGKILVIDGGFSRAYQKTTGIAGYTLIYNSRTLQLVSHEPFNSAEEAIANESDILSTTVVVEHKAKRKMVRDTDEGIKIQEEIEDLKLLLMAYKKGLIKEM.

The protein belongs to the FBPase class 3 family. Requires Mn(2+) as cofactor.

It catalyses the reaction beta-D-fructose 1,6-bisphosphate + H2O = beta-D-fructose 6-phosphate + phosphate. It functions in the pathway carbohydrate biosynthesis; gluconeogenesis. The chain is Fructose-1,6-bisphosphatase class 3 from Clostridioides difficile (strain 630) (Peptoclostridium difficile).